Reading from the N-terminus, the 213-residue chain is GTP-binding protein YPTC4 (213 aa).

13-21 (GDTGVGKSC) serves as a coordination point for GTP. The Effector region signature appears at 35–43 (HDLTIGVEF). GTP contacts are provided by residues 61-65 (DTAGQ), 119-122 (NKCD), and 149-151 (SAR). A disordered region spans residues 194–213 (AGPQTVKPGEGGAAKSSSCC). Residues Cys-212 and Cys-213 are each lipidated (S-geranylgeranyl cysteine).

Belongs to the small GTPase superfamily. Rab family.

Its subcellular location is the cell membrane. Its function is as follows. Protein transport. Probably involved in vesicular traffic. The sequence is that of GTP-binding protein YPTC4 (YPTC4) from Chlamydomonas reinhardtii (Chlamydomonas smithii).